Here is a 368-residue protein sequence, read N- to C-terminus: Galanin receptor type 3 (368 aa).

The Extracellular portion of the chain corresponds to 1–20 (MADAQNISLDSPGSVGAVAV). The N-linked (GlcNAc...) asparagine glycan is linked to asparagine 6. The helical transmembrane segment at 21–41 (PVVFALIFLLGTVGNGLVLAV) threads the bilayer. The Cytoplasmic segment spans residues 42–57 (LLQPGPSAWQEPGSTT). Residues 58 to 78 (DLFILNLAVADLCFILCCVPF) form a helical membrane-spanning segment. Topologically, residues 79-96 (QATIYTLDAWLFGALVCK) are extracellular. Cysteine 95 and cysteine 172 are joined by a disulfide. A helical membrane pass occupies residues 97-118 (AVHLLIYLTMYASSFTLAAVSV). Residues 119 to 138 (DRYLAVRHPLRSRALRTPRN) are Cytoplasmic-facing. A helical transmembrane segment spans residues 139–159 (ARAAVGLVWLLAALFSAPYLS). Topologically, residues 160–184 (YYGTVRYGALELCVPAWEDARRRAL) are extracellular. A helical membrane pass occupies residues 185-205 (DVATFAAGYLLPVAVVSLAYG). Residues 206–236 (RTLRFLWAAVGPAGAAAAEARRRATGRAGRA) are Cytoplasmic-facing. Residues 237–257 (MLAVAALYALCWGPHHALILC) form a helical membrane-spanning segment. Residues 258–259 (FW) lie on the Extracellular side of the membrane. Residues 260 to 280 (YGRFAFSPATYACRLASHCLA) form a helical membrane-spanning segment. Residues 281–368 (YANSCLNPLV…HGGEAARGPE (88 aa)) are Cytoplasmic-facing. Cysteine 308 carries S-palmitoyl cysteine lipidation. The disordered stretch occupies residues 317 to 368 (RRALRRVRPASSGPPGCPGDARPSGRLLAGGGQGPEPREGPVHGGEAARGPE).

This sequence belongs to the G-protein coupled receptor 1 family.

The protein localises to the cell membrane. In terms of biological role, receptor for the hormone galanin. Receptor for the hormone spexin-1. The sequence is that of Galanin receptor type 3 (GALR3) from Homo sapiens (Human).